Here is a 3032-residue protein sequence, read N- to C-terminus: Biorientation of chromosomes in cell division protein 1-like 1 (3032 aa).

Residues 1 to 31 (MATNPQPQPPPPAPPPPPPQPQPPPPPPGPG) are compositionally biased toward pro residues. Disordered stretches follow at residues 1–48 (MATN…GAGD), 164–195 (EEAA…SANV), 214–397 (NAAR…LDSD), and 409–465 (VHTS…RGVR). A compositionally biased stretch (gly residues) spans 32-46 (AGPGASGPGSAGAGA). The segment covering 234–243 (KLSSQPSTDV) has biased composition (polar residues). The segment covering 244–261 (STDKERGSEDATEREKAT) has biased composition (basic and acidic residues). At serine 264 the chain carries Phosphoserine. Positions 310–391 (TDPKIKSMDK…RAAEGTKEDC (82 aa)) are enriched in basic and acidic residues. Acidic residues predominate over residues 416–441 (SFEEDTEEEVVVSESMEEGEITSEDE). Lysine 471 is modified (N6-acetyllysine). Phosphoserine is present on residues serine 480 and serine 482. 7 disordered regions span residues 480–1153 (SDSD…HKAT), 1165–1296 (MVDS…HNSN), 1309–1366 (GGRA…LSED), 1424–1491 (AAGE…SGRR), 1675–1701 (GSLS…TEGT), 1740–1858 (AKPQ…GHAS), and 1934–1978 (ALAG…ISTG). Basic and acidic residues-rich tracts occupy residues 488 to 503 (VEQR…EERL) and 510 to 525 (REKL…EKTK). An N6-acetyllysine modification is found at lysine 534. Composition is skewed to basic and acidic residues over residues 547-568 (LEPK…EKKV) and 578-653 (SRNV…EYKR). Phosphoserine is present on residues serine 632 and serine 656. A Phosphothreonine modification is found at threonine 657. Basic and acidic residues-rich tracts occupy residues 668 to 736 (TDTR…DKPS), 743 to 768 (GDSV…ESVR), and 799 to 846 (RDGK…KLQK). The segment covering 848-859 (ALSSKQHSVTSQ) has biased composition (polar residues). 4 stretches are compositionally biased toward basic and acidic residues: residues 860-872 (KRSE…KCET), 934-960 (KPDK…RTSE), 978-1015 (AQKD…DGHR), and 1022-1069 (SNKD…ENRR). A Phosphoserine modification is found at serine 1071. Positions 1086-1096 (MSGTTSSSSLQ) are enriched in polar residues. Position 1138 is a phosphoserine (serine 1138). Over residues 1272–1286 (STDSDLLSSSGSVTV) the composition is skewed to low complexity. Polar residues predominate over residues 1312-1329 (ASTSLANHSDVPNQYSTV). Phosphoserine occurs at positions 1315 and 1364. Composition is skewed to basic and acidic residues over residues 1428 to 1470 (HVVD…RRDS) and 1479 to 1491 (GKME…SGRR). Serine 1676 and serine 1685 each carry phosphoserine. A compositionally biased stretch (basic and acidic residues) spans 1958–1970 (HHSDSQLTRKETV). Residues serine 1989, serine 2001, serine 2092, and serine 2166 each carry the phosphoserine modification. The segment at 2082–2101 (PMPSAVSGENSQLTASRSEE) is disordered. The segment covering 2088–2097 (SGENSQLTAS) has biased composition (polar residues). Disordered stretches follow at residues 2303–2322 (EENQ…LATK), 2370–2469 (EPSV…HCLT), 2536–2559 (EGGL…EKMG), and 2575–2596 (DVTL…PPKG). 2 positions are modified to phosphoserine: serine 2417 and serine 2443. Basic and acidic residues predominate over residues 2449–2459 (CLREPEQKPAE). Serine 2554 carries the phosphoserine modification. The residue at position 2681 (serine 2681) is a Phosphoserine. The disordered stretch occupies residues 2682 to 3032 (TEALSGCSVE…DENPLKKAKR (351 aa)). Acidic residues-rich tracts occupy residues 2692 to 2701 (ADPEEVEEEE) and 2715 to 2725 (SSEEELDDSPD). The span at 2727–2750 (LDSRIETAQRQYSETEPHDTKEEN) shows a compositional bias: basic and acidic residues. Polar residues predominate over residues 2758–2769 (SSVTSKTNSSTG). The span at 2782–2804 (TGEKTEPNEDDGSIKSQEDDHPI) shows a compositional bias: basic and acidic residues. Over residues 2805–2815 (IIKRRRGRPRK) the composition is skewed to basic residues. The a.T hook DNA-binding region spans 2807-2819 (KRRRGRPRKYPAE). Over residues 2822 to 2832 (FKSKEDSKTET) the composition is skewed to basic and acidic residues. The segment covering 2833–2843 (DITTVEQSSPS) has biased composition (polar residues). 2 positions are modified to phosphoserine: serine 2840 and serine 2841. Residues 2853–2867 (ESNKEIANLEEKSTS) are compositionally biased toward basic and acidic residues. Serine 2888 bears the Phosphoserine mark. Threonine 2890 carries the post-translational modification Phosphothreonine. A phosphoserine mark is found at serine 2892, serine 2898, and serine 2907. Glycyl lysine isopeptide (Lys-Gly) (interchain with G-Cter in ubiquitin) cross-links involve residues lysine 2915 and lysine 2916. A compositionally biased stretch (acidic residues) spans 2919–2932 (ESDEEEEEEEEEEP). Serine 2920 is subject to Phosphoserine. Residues 2975–2987 (LAKEKLSTSEKVS) are compositionally biased toward basic and acidic residues. Serine 3000 bears the Phosphoserine mark. Residues 3020 to 3032 (QKVDENPLKKAKR) are compositionally biased toward basic and acidic residues.

It belongs to the BOD1 family. Interacts (via COMPASS-Shg1 domain) with SETD1A at stalled replication forks; this interaction mediates FANCD2-dependent nucleosome remodeling at reversed forks protecting them from nucleolytic degradation.

It localises to the chromosome. In terms of biological role, component of the fork protection machinery required to protect stalled/damaged replication forks from uncontrolled DNA2-dependent resection. Acts by stabilizing RAD51 at stalled replication forks and protecting RAD51 nucleofilaments from the antirecombinogenic activities of FBH1 and BLM. Does not regulate spindle orientation. The sequence is that of Biorientation of chromosomes in cell division protein 1-like 1 from Mus musculus (Mouse).